Reading from the N-terminus, the 203-residue chain is Snake venom metalloproteinase atroxase (203 aa).

Pyrrolidone carboxylic acid (Glu) is present on Glu-1. Asn-5 carries an N-linked (GlcNAc...) asparagine glycan. One can recognise a Peptidase M12B domain in the interval 9 to 203 (RYIELVVVAD…KQYNPQIXNK (195 aa)). Residues Glu-12 and Asp-96 each coordinate Ca(2+). Residue His-145 coordinates Zn(2+). The active site involves Glu-146. Residues His-149 and His-155 each coordinate Zn(2+). Residues Cys-160 and Cys-167 are joined by a disulfide bond. Residue Asn-202 participates in Ca(2+) binding.

The protein belongs to the venom metalloproteinase (M12B) family. P-I subfamily. In terms of assembly, monomer. The cofactor is Zn(2+). Post-translationally, the N-terminus is blocked. As to expression, expressed by the venom gland.

The protein localises to the secreted. It carries out the reaction Cleavage of 5-His-|-Leu-6, 9-Ser-|-His-10, 10-His-|-Leu-11, 14-Ala-|-Leu-15 and 16-Tyr-|-Leu-17 in insulin B chain.. With respect to regulation, inhibited by EDTA and alpha2-macroglobulin. In terms of biological role, snake venom zinc metalloprotease that has Aalpha, Bbeta fibrin(ogen)olytic activities. It cleaves the Aalpha chain of fibrinogen first followed by the Bbeta chain and shows no effect on the gamma chain. Does not induce or inhibit platelet aggregation, and is unable to activate plasminogen. Exhibits low lethality when tested on mice. Intravenous administration results in thrombolysis within one hour followed by recanalization. Fibrinogenolytic activity results in a 60% decrease in the rat's plasma fibrinogen level. Histological examination of kidney, liver, heart and lung tissue shows no necrosis nor hemorrhage. The sequence is that of Snake venom metalloproteinase atroxase from Crotalus atrox (Western diamondback rattlesnake).